The sequence spans 322 residues: Phospho-N-acetylmuramoyl-pentapeptide-transferase (322 aa).

10 consecutive transmembrane segments (helical) span residues 10-30 (YTAL…IPML), 51-71 (NGTP…TGLT), 79-99 (MAVG…DDFI), 107-127 (LGLK…YVAF), 146-166 (FVIN…VAIV), 178-198 (LASG…SSIA), 203-223 (VAVL…FNSY), 227-247 (VFMG…FSVL), 250-270 (SVLI…SVLI), and 302-322 (VVFI…IAVF).

It belongs to the glycosyltransferase 4 family. MraY subfamily. The cofactor is Mg(2+).

Its subcellular location is the cell membrane. The catalysed reaction is UDP-N-acetyl-alpha-D-muramoyl-L-alanyl-gamma-D-glutamyl-meso-2,6-diaminopimeloyl-D-alanyl-D-alanine + di-trans,octa-cis-undecaprenyl phosphate = di-trans,octa-cis-undecaprenyl diphospho-N-acetyl-alpha-D-muramoyl-L-alanyl-D-glutamyl-meso-2,6-diaminopimeloyl-D-alanyl-D-alanine + UMP. The protein operates within cell wall biogenesis; peptidoglycan biosynthesis. In terms of biological role, catalyzes the initial step of the lipid cycle reactions in the biosynthesis of the cell wall peptidoglycan: transfers peptidoglycan precursor phospho-MurNAc-pentapeptide from UDP-MurNAc-pentapeptide onto the lipid carrier undecaprenyl phosphate, yielding undecaprenyl-pyrophosphoryl-MurNAc-pentapeptide, known as lipid I. This Clostridioides difficile (strain 630) (Peptoclostridium difficile) protein is Phospho-N-acetylmuramoyl-pentapeptide-transferase.